The sequence spans 92 residues: RNA-binding protein Hfq (92 aa).

Positions 9 to 68 (DPFLNALRRERVPVSVYLVNGIKLQGTIESFDQFVVLLRNTVSQMVYKHAISTVVPARNV) constitute a Sm domain. A disordered region spans residues 73–92 (GGGYVQSNEGNQAEDDDVEQ).

The protein belongs to the Hfq family. Homohexamer.

Functionally, RNA chaperone that binds small regulatory RNA (sRNAs) and mRNAs to facilitate mRNA translational regulation in response to envelope stress, environmental stress and changes in metabolite concentrations. Also binds with high specificity to tRNAs. This is RNA-binding protein Hfq from Xanthomonas axonopodis pv. citri (strain 306).